The following is an 82-amino-acid chain: Putative membrane protein insertion efficiency factor (82 aa).

A disordered region spans residues 61-82; the sequence is HEGGYDPVPKRKNKNSEGKREE.

The protein belongs to the UPF0161 family.

It localises to the cell inner membrane. In terms of biological role, could be involved in insertion of integral membrane proteins into the membrane. This Fusobacterium nucleatum subsp. nucleatum (strain ATCC 25586 / DSM 15643 / BCRC 10681 / CIP 101130 / JCM 8532 / KCTC 2640 / LMG 13131 / VPI 4355) protein is Putative membrane protein insertion efficiency factor.